Here is a 362-residue protein sequence, read N- to C-terminus: Chorismate synthase (362 aa).

Arg48 is an NADP(+) binding site. Residues 131 to 133 (RAS), 243 to 244 (NA), Gly288, 303 to 307 (KPTSS), and Arg329 contribute to the FMN site.

Belongs to the chorismate synthase family. Homotetramer. FMNH2 is required as a cofactor.

The catalysed reaction is 5-O-(1-carboxyvinyl)-3-phosphoshikimate = chorismate + phosphate. It participates in metabolic intermediate biosynthesis; chorismate biosynthesis; chorismate from D-erythrose 4-phosphate and phosphoenolpyruvate: step 7/7. Catalyzes the anti-1,4-elimination of the C-3 phosphate and the C-6 proR hydrogen from 5-enolpyruvylshikimate-3-phosphate (EPSP) to yield chorismate, which is the branch point compound that serves as the starting substrate for the three terminal pathways of aromatic amino acid biosynthesis. This reaction introduces a second double bond into the aromatic ring system. The chain is Chorismate synthase from Bartonella tribocorum (strain CIP 105476 / IBS 506).